We begin with the raw amino-acid sequence, 144 residues long: Flagellar assembly factor FliW (144 aa).

Belongs to the FliW family. In terms of assembly, interacts with translational regulator CsrA and flagellin(s).

It is found in the cytoplasm. Acts as an anti-CsrA protein, binds CsrA and prevents it from repressing translation of its target genes, one of which is flagellin. Binds to flagellin and participates in the assembly of the flagellum. This is Flagellar assembly factor FliW from Bacillus pumilus (strain SAFR-032).